We begin with the raw amino-acid sequence, 944 residues long: UvrABC system protein A (944 aa).

Residues methionine 1–valine 242 form the ABC transporter 1 domain. ATP is bound at residue glycine 34–serine 41. The C4-type; degenerate zinc-finger motif lies at cysteine 256–cysteine 283. ABC transporter domains lie at glutamate 359–serine 597 and serine 610–tyrosine 935. Glycine 643 to serine 650 is an ATP binding site. Residues cysteine 744–cysteine 770 form a C4-type zinc finger.

The protein belongs to the ABC transporter superfamily. UvrA family. As to quaternary structure, forms a heterotetramer with UvrB during the search for lesions.

Its subcellular location is the cytoplasm. The UvrABC repair system catalyzes the recognition and processing of DNA lesions. UvrA is an ATPase and a DNA-binding protein. A damage recognition complex composed of 2 UvrA and 2 UvrB subunits scans DNA for abnormalities. When the presence of a lesion has been verified by UvrB, the UvrA molecules dissociate. The polypeptide is UvrABC system protein A (Mycoplasmopsis pulmonis (strain UAB CTIP) (Mycoplasma pulmonis)).